The chain runs to 31 residues: uncharacterized protein (31 aa).

The tract at residues 1-31 (MKKLERMSEVSQMCSEAKKNRKRMSVVSSVA) is disordered.

This is an uncharacterized protein from Sulfolobus islandicus filamentous virus (isolate Iceland/Hveragerdi) (SIFV).